Consider the following 150-residue polypeptide: Protein-export protein SecB (150 aa).

The protein belongs to the SecB family. Homotetramer, a dimer of dimers. One homotetramer interacts with 1 SecA dimer.

It localises to the cytoplasm. Its function is as follows. One of the proteins required for the normal export of preproteins out of the cell cytoplasm. It is a molecular chaperone that binds to a subset of precursor proteins, maintaining them in a translocation-competent state. It also specifically binds to its receptor SecA. This Polaromonas sp. (strain JS666 / ATCC BAA-500) protein is Protein-export protein SecB.